The primary structure comprises 140 residues: uncharacterized protein (140 aa).

This is an uncharacterized protein from Bacillus subtilis (strain 168).